We begin with the raw amino-acid sequence, 216 residues long: Small ribosomal subunit protein uS5 (216 aa).

The segment at 1-55 (MDRKLENQKDLLNQDPKVELNSQSVAKNPLNSREVKPIQRRRPLRKNSRDKNSKP) is disordered. The segment covering 20–31 (LNSQSVAKNPLN) has biased composition (polar residues). One can recognise an S5 DRBM domain in the interval 57–120 (FEERVIAIHR…KDAQNRLVSV (64 aa)).

This sequence belongs to the universal ribosomal protein uS5 family. As to quaternary structure, part of the 30S ribosomal subunit. Contacts proteins S4 and S8.

With S4 and S12 plays an important role in translational accuracy. Functionally, located at the back of the 30S subunit body where it stabilizes the conformation of the head with respect to the body. The chain is Small ribosomal subunit protein uS5 from Mesomycoplasma hyopneumoniae (strain J / ATCC 25934 / NCTC 10110) (Mycoplasma hyopneumoniae).